The chain runs to 110 residues: UPF0122 protein SP70585_1353 (110 aa).

It belongs to the UPF0122 family.

In terms of biological role, might take part in the signal recognition particle (SRP) pathway. This is inferred from the conservation of its genetic proximity to ftsY/ffh. May be a regulatory protein. In Streptococcus pneumoniae (strain 70585), this protein is UPF0122 protein SP70585_1353.